A 302-amino-acid polypeptide reads, in one-letter code: Recombination-associated protein RdgC (302 aa).

This sequence belongs to the RdgC family.

It localises to the cytoplasm. The protein localises to the nucleoid. In terms of biological role, may be involved in recombination. The chain is Recombination-associated protein RdgC from Actinobacillus succinogenes (strain ATCC 55618 / DSM 22257 / CCUG 43843 / 130Z).